The primary structure comprises 343 residues: L-idonate 5-dehydrogenase (NAD(P)(+)) (343 aa).

Zn(2+) contacts are provided by Cys-40, His-65, Cys-93, Cys-96, Cys-99, Cys-107, and Glu-153.

It belongs to the zinc-containing alcohol dehydrogenase family. It depends on Zn(2+) as a cofactor.

It carries out the reaction L-idonate + NADP(+) = 5-dehydro-D-gluconate + NADPH + H(+). The catalysed reaction is L-idonate + NAD(+) = 5-dehydro-D-gluconate + NADH + H(+). It participates in carbohydrate acid metabolism; L-idonate degradation. Functionally, catalyzes the NADH/NADPH-dependent oxidation of L-idonate to 5-ketogluconate (5KG). The protein is L-idonate 5-dehydrogenase (NAD(P)(+)) (idnD) of Escherichia coli (strain K12).